An 86-amino-acid polypeptide reads, in one-letter code: Cell division topological specificity factor (86 aa).

Belongs to the MinE family.

In terms of biological role, prevents the cell division inhibition by proteins MinC and MinD at internal division sites while permitting inhibition at polar sites. This ensures cell division at the proper site by restricting the formation of a division septum at the midpoint of the long axis of the cell. This Stenotrophomonas maltophilia (strain K279a) protein is Cell division topological specificity factor.